A 460-amino-acid polypeptide reads, in one-letter code: V-type ATP synthase beta chain 2 (460 aa).

The protein belongs to the ATPase alpha/beta chains family.

Produces ATP from ADP in the presence of a proton gradient across the membrane. The V-type beta chain is a regulatory subunit. The chain is V-type ATP synthase beta chain 2 from Clostridium tetani (strain Massachusetts / E88).